A 578-amino-acid polypeptide reads, in one-letter code: MMTPQVITPQQMQQILQQQVLTPQQLQVLLQQQQALMLQQQLQEFYKKQQEQLQLQLLQQQHAGKQPKEQQQQQQVATQQLAFQQQLLQMQQLQQQHLLTLQRQGLLSIQPGQPTLPLQSLAQGMIPAELQQLWKEVTGSHTADDVVCNNHSTLDLSTTCVSSTAQPKTSLLLNSQASTNGQASVLTLKRESSSHEEYTHNHPLYGHGVCKWPGCETICEDFPSFLKHLNSEHALDDRSTAQCRVQMQVVQQLELQLSKDKERLQAMMSHLHVKSTEPKASPQPLNLVSSATLSKTASEASPQSLPHTPTTPTAPLTPITQGPSVITTTSIHNVGPIRRRYSDKYNIPISSDFAQNQEFYKNAEVRPPFTYASLIRQGILESPEKQLTLNEIYNWFTRQFAYFRRNAATWKNAVRHNLSLHKCFVRVENVKGAVWTVDEMEFQKRRPQKISGSPTLIKNIQTSHAYCSPLSAALQASMAENSLPLYTTASMGNPALNSLANAIREDLNGVMEHTSSNGSDSSPGRSPMQGMHQVHVKEEPLDHDDNDGPLSLVTTANHSPDFDRDRDYEDDPVNDDME.

The C2H2-type zinc-finger motif lies at 208–233 (GVCKWPGCETICEDFPSFLKHLNSEH). The tract at residues 250-271 (VQQLELQLSKDKERLQAMMSHL) is leucine-zipper. The tract at residues 284–288 (PLNLV) is ctbp1-binding. The segment covering 293-305 (LSKTASEASPQSL) has biased composition (polar residues). A disordered region spans residues 293-325 (LSKTASEASPQSLPHTPTTPTAPLTPITQGPSV). Low complexity predominate over residues 306–320 (PHTPTTPTAPLTPIT). Positions 366-456 (RPPFTYASLI…PQKISGSPTL (91 aa)) form a DNA-binding region, fork-head. Residues 511-578 (MEHTSSNGSD…EDDPVNDDME (68 aa)) are disordered. The span at 515 to 527 (SSNGSDSSPGRSP) shows a compositional bias: low complexity. The span at 568–578 (YEDDPVNDDME) shows a compositional bias: acidic residues.

In terms of assembly, dimerization is required for DNA-binding. Isoform a, but not isoform b, interacts with ctbp1. As to expression, all isoforms show similar spatial expression. Localized to the animal hemisphere of early cleavage stage embryos. At tailbud stages, expressed in regions of the brain, eye and the splanchnic mesodermal layer of the lateral plate mesoderm surrounding the gut. At stage 35, expressed within the lens of the eye, in distinct regions of the head mesenchyme and in the area anterior to the gut. In the brain the anterior-most expression is restricted to the outer region of the mesencephalon. With ongoing development, additional expression is found in the curling gut.

The protein resides in the nucleus. Its function is as follows. Transcriptional repressor. In Xenopus laevis (African clawed frog), this protein is Forkhead box protein P1.